Consider the following 62-residue polypeptide: MTQVILGENEGIESALRRFKRQVSQAGIFPDMKKHRHFETPIEKRKRKAMALQKQRKRRSRY.

Positions Glu43–Tyr62 are disordered. Basic residues predominate over residues Lys44–Tyr62.

This sequence belongs to the bacterial ribosomal protein bS21 family.

This chain is Small ribosomal subunit protein bS21, found in Trichodesmium erythraeum (strain IMS101).